A 137-amino-acid polypeptide reads, in one-letter code: Aspartate 1-decarboxylase (137 aa).

Ser25 serves as the catalytic Schiff-base intermediate with substrate; via pyruvic acid. Pyruvic acid (Ser) is present on Ser25. Thr57 is a binding site for substrate. Catalysis depends on Tyr58, which acts as the Proton donor. 73–75 lines the substrate pocket; it reads GAA.

This sequence belongs to the PanD family. In terms of assembly, heterooctamer of four alpha and four beta subunits. It depends on pyruvate as a cofactor. Post-translationally, is synthesized initially as an inactive proenzyme, which is activated by self-cleavage at a specific serine bond to produce a beta-subunit with a hydroxyl group at its C-terminus and an alpha-subunit with a pyruvoyl group at its N-terminus.

The protein localises to the cytoplasm. The catalysed reaction is L-aspartate + H(+) = beta-alanine + CO2. It participates in cofactor biosynthesis; (R)-pantothenate biosynthesis; beta-alanine from L-aspartate: step 1/1. Catalyzes the pyruvoyl-dependent decarboxylation of aspartate to produce beta-alanine. In Thermobifida fusca (strain YX), this protein is Aspartate 1-decarboxylase.